We begin with the raw amino-acid sequence, 100 residues long: Small ribosomal subunit protein uS14c (100 aa).

It belongs to the universal ribosomal protein uS14 family. As to quaternary structure, part of the 30S ribosomal subunit.

It is found in the plastid. Its subcellular location is the chloroplast. Its function is as follows. Binds 16S rRNA, required for the assembly of 30S particles. This chain is Small ribosomal subunit protein uS14c, found in Trieres chinensis (Marine centric diatom).